A 520-amino-acid chain; its full sequence is GMP synthase [glutamine-hydrolyzing] (520 aa).

A Glutamine amidotransferase type-1 domain is found at 9–202; sequence SVLIVDFGSQ…IHNVAGIKGD (194 aa). Cysteine 86 functions as the Nucleophile in the catalytic mechanism. Catalysis depends on residues histidine 176 and glutamate 178. The region spanning 203–395 is the GMPS ATP-PPase domain; the sequence is WSMSAYRQKA…LGLPDSFIGR (193 aa). Residue 230–236 coordinates ATP; it reads SGGVDSS.

In terms of assembly, homodimer.

It carries out the reaction XMP + L-glutamine + ATP + H2O = GMP + L-glutamate + AMP + diphosphate + 2 H(+). It participates in purine metabolism; GMP biosynthesis; GMP from XMP (L-Gln route): step 1/1. Functionally, catalyzes the synthesis of GMP from XMP. The chain is GMP synthase [glutamine-hydrolyzing] from Rhizobium etli (strain ATCC 51251 / DSM 11541 / JCM 21823 / NBRC 15573 / CFN 42).